A 126-amino-acid polypeptide reads, in one-letter code: NADH-quinone oxidoreductase subunit A (126 aa).

3 consecutive transmembrane segments (helical) span residues 14–34 (FLYF…TSWF), 66–86 (FYLI…LYAW), and 96–116 (IGFV…FYLV).

This sequence belongs to the complex I subunit 3 family. As to quaternary structure, NDH-1 is composed of 13 different subunits. Subunits NuoA, H, J, K, L, M, N constitute the membrane sector of the complex.

The protein localises to the cell membrane. The enzyme catalyses a quinone + NADH + 5 H(+)(in) = a quinol + NAD(+) + 4 H(+)(out). Functionally, NDH-1 shuttles electrons from NADH, via FMN and iron-sulfur (Fe-S) centers, to quinones in the respiratory chain. The immediate electron acceptor for the enzyme in this species is believed to be ubiquinone. Couples the redox reaction to proton translocation (for every two electrons transferred, four hydrogen ions are translocated across the cytoplasmic membrane), and thus conserves the redox energy in a proton gradient. This Buchnera aphidicola subsp. Schizaphis graminum (strain Sg) protein is NADH-quinone oxidoreductase subunit A.